The following is a 244-amino-acid chain: Tabinhibitin 8 (244 aa).

An N-terminal signal peptide occupies residues M1 to S23. Residues Y67–C194 enclose the SCP domain. Residues R143–D145 carry the Cell attachment site motif.

This sequence belongs to the CRISP family. In terms of tissue distribution, expressed in salivary glands.

It localises to the secreted. In terms of biological role, inhibits platelet aggregation induced by all agonists tested (ADP, arachidonic acid, the thromboxane A2 analog U46619, thrombin, and snake venom snaclecs (TMVA that activates platelet through GPIB, and stejnulxin that specifically acts through GPVI (GP6))). May act by competing with fibrinogen for binding to glycoprotein IIb/IIIa (ITGA2B/ITGB3). The sequence is that of Tabinhibitin 8 from Tabanus yao (Horsefly).